The primary structure comprises 375 residues: Probable trehalose-phosphate phosphatase 7 (375 aa).

The protein belongs to the trehalose phosphatase family. A divalent metal cation is required as a cofactor.

The catalysed reaction is alpha,alpha-trehalose 6-phosphate + H2O = alpha,alpha-trehalose + phosphate. The protein operates within glycan biosynthesis; trehalose biosynthesis. Functionally, removes the phosphate from trehalose 6-phosphate to produce free trehalose. Trehalose accumulation in plant may improve abiotic stress tolerance. The protein is Probable trehalose-phosphate phosphatase 7 (TPP7) of Oryza sativa subsp. japonica (Rice).